Consider the following 918-residue polypeptide: Probable UDP-N-acetylglucosamine--peptide N-acetylglucosaminyltransferase SPINDLY (918 aa).

11 TPR repeats span residues 34 to 66 (GKEA…SKNV), 67 to 99 (EAHI…DPHN), 101 to 132 (CALT…DPSY), 140 to 171 (ATVL…DPHY), 172 to 205 (APAC…SPTY), 207 to 238 (DAYC…NNMG), 239 to 271 (IALT…NWHY), 273 to 305 (DAMY…NPHC), 306 to 339 (AEAC…KPNF), 341 to 373 (QSLN…NPTY), and 374 to 407 (AEAY…DPDS). The catalytic region stretch occupies residues 408–918 (RNAGQNRLLA…LNCGDQCFRV (511 aa)). Polar residues predominate over residues 843–853 (QLHQQPNTSPQ). Positions 843–877 (QLHQQPNTSPQKLVKDEPADDASGPEHGPASKDNP) are disordered.

The protein belongs to the glycosyltransferase 41 family. O-GlcNAc transferase subfamily.

The protein resides in the nucleus. The enzyme catalyses L-seryl-[protein] + UDP-N-acetyl-alpha-D-glucosamine = 3-O-(N-acetyl-beta-D-glucosaminyl)-L-seryl-[protein] + UDP + H(+). It carries out the reaction L-threonyl-[protein] + UDP-N-acetyl-alpha-D-glucosamine = 3-O-(N-acetyl-beta-D-glucosaminyl)-L-threonyl-[protein] + UDP + H(+). It functions in the pathway protein modification; protein glycosylation. Probable O-linked N-acetylglucosamine transferase (OGT) involved in various processes such as gibberellin (GA) signaling pathway. OGTs catalyze the addition of nucleotide-activated sugars directly onto the polypeptide through O-glycosidic linkage with the hydroxyl of serine or threonine. Probably acts by adding O-linked sugars to yet unknown proteins. May function as a negative regulator of GA signal transduction during vernalization, inhibiting adventitious shoot elongation during vernalization. The polypeptide is Probable UDP-N-acetylglucosamine--peptide N-acetylglucosaminyltransferase SPINDLY (SPY) (Eustoma exaltatum subsp. russellianum (Bluebells)).